Reading from the N-terminus, the 188-residue chain is Peptide deformylase (188 aa).

Residues Cys109 and His152 each coordinate Fe cation. Residue Glu153 is part of the active site. His156 contacts Fe cation.

It belongs to the polypeptide deformylase family. Requires Fe(2+) as cofactor.

The catalysed reaction is N-terminal N-formyl-L-methionyl-[peptide] + H2O = N-terminal L-methionyl-[peptide] + formate. In terms of biological role, removes the formyl group from the N-terminal Met of newly synthesized proteins. Requires at least a dipeptide for an efficient rate of reaction. N-terminal L-methionine is a prerequisite for activity but the enzyme has broad specificity at other positions. This is Peptide deformylase from Chloroflexus aggregans (strain MD-66 / DSM 9485).